A 515-amino-acid chain; its full sequence is Maturase K (515 aa).

It belongs to the intron maturase 2 family. MatK subfamily.

Its subcellular location is the plastid. The protein localises to the chloroplast. Its function is as follows. Usually encoded in the trnK tRNA gene intron. Probably assists in splicing its own and other chloroplast group II introns. In Trillium pusillum (Dwarf wakerobin), this protein is Maturase K.